The primary structure comprises 305 residues: tRNA uridine(34) hydroxylase (305 aa).

Residues 126 to 220 enclose the Rhodanese domain; it reads SDPEVIVIDT…YLEQIPPEES (95 aa). Cys-180 acts as the Cysteine persulfide intermediate in catalysis.

Belongs to the TrhO family.

It catalyses the reaction uridine(34) in tRNA + AH2 + O2 = 5-hydroxyuridine(34) in tRNA + A + H2O. Functionally, catalyzes oxygen-dependent 5-hydroxyuridine (ho5U) modification at position 34 in tRNAs. In Trichormus variabilis (strain ATCC 29413 / PCC 7937) (Anabaena variabilis), this protein is tRNA uridine(34) hydroxylase.